The sequence spans 478 residues: Sialidase-4 (478 aa).

The short motif at 22 to 25 (YRVP) is the FRIP motif element. Substrate contacts are provided by Arg23 and Arg43. Residues Asp47 and Asp48 each act as proton acceptor in the active site. One copy of the BNR 1 repeat lies at 127–138 (VTSCDAGLTWGS). 2 residues coordinate substrate: Tyr177 and Tyr179. The BNR 2 repeat unit spans residues 200–211 (FYSDDHGISWHC). Positions 222 and 238 each coordinate substrate. The BNR 3 repeat unit spans residues 247–258 (ALSADEGTSFLP). Disordered regions lie at residues 285 to 307 (IEPQ…CFNL) and 335 to 359 (SRSP…PECP). Arg383 serves as a coordination point for substrate. Catalysis depends on Tyr413, which acts as the Nucleophile. Glu434 is a catalytic residue.

Belongs to the glycosyl hydrolase 33 family. Highly expressed in brain, particularly in hippocampus, and at lower levels in liver and spleen. Expressed in hippocampal neurons (at protein level).

It is found in the cell membrane. Its subcellular location is the endoplasmic reticulum membrane. The protein localises to the microsome membrane. The protein resides in the mitochondrion inner membrane. It localises to the mitochondrion outer membrane. It is found in the cell projection. Its subcellular location is the neuron projection. The protein localises to the lysosome lumen. It carries out the reaction Hydrolysis of alpha-(2-&gt;3)-, alpha-(2-&gt;6)-, alpha-(2-&gt;8)- glycosidic linkages of terminal sialic acid residues in oligosaccharides, glycoproteins, glycolipids, colominic acid and synthetic substrates.. The enzyme catalyses a ganglioside GM3 + H2O = a beta-D-galactosyl-(1-&gt;4)-beta-D-glucosyl-(1&lt;-&gt;1)-ceramide + N-acetylneuraminate. It catalyses the reaction a ganglioside GM3 (d18:1(4E)) + H2O = a beta-D-Gal-(1-&gt;4)-beta-D-Glc-(1&lt;-&gt;1)-Cer(d18:1(4E)) + N-acetylneuraminate. The catalysed reaction is a ganglioside GM2 + H2O = a ganglioside GA2 + N-acetylneuraminate. It carries out the reaction a ganglioside GM2 (d18:1(4E)) + H2O = a ganglioside GA2 (d18:1(4E)) + N-acetylneuraminate. The enzyme catalyses a ganglioside GD1a + H2O = a ganglioside GM1 + N-acetylneuraminate. It catalyses the reaction a ganglioside GD1a (d18:1(4E)) + H2O = a ganglioside GM1 (d18:1(4E)) + N-acetylneuraminate. The catalysed reaction is a ganglioside GD3 + H2O = a ganglioside GM3 + N-acetylneuraminate. It carries out the reaction a ganglioside GD3 (d18:1(4E)) + H2O = a ganglioside GM3 (d18:1(4E)) + N-acetylneuraminate. Its function is as follows. Exo-alpha-sialidase that catalyzes the hydrolytic cleavage of the terminal sialic acid (N-acetylneuraminic acid, Neu5Ac) of a glycan moiety in the catabolism of glycolipids, glycoproteins and oligosacharides. Efficiently hydrolyzes gangliosides including alpha-(2-&gt;3)-sialylated GD1a and GM3 and alpha-(2-&gt;8)-sialylated GD3. Hydrolyzes poly-alpha-(2-&gt;8)-sialylated neural cell adhesion molecule NCAM1 likely at growth cones, suppressing neurite outgrowth in hippocampal neurons. May desialylate sialyl Lewis A and X antigens at the cell surface, down-regulating these glycan epitopes recognized by SELE/E selectin in the initiation of cell adhesion and extravasation. Has sialidase activity toward mucin, fetuin and sialyllactose. The protein is Sialidase-4 (Neu4) of Mus musculus (Mouse).